Consider the following 334-residue polypeptide: Adenosine deaminase (334 aa).

Positions 16 and 18 each coordinate Zn(2+). The substrate site is built by His-18, Asp-20, and Gly-173. His-200 is a binding site for Zn(2+). Glu-203 serves as the catalytic Proton donor. Asp-281 contributes to the Zn(2+) binding site.

Belongs to the metallo-dependent hydrolases superfamily. Adenosine and AMP deaminases family. Adenosine deaminase subfamily. Requires Zn(2+) as cofactor.

The catalysed reaction is adenosine + H2O + H(+) = inosine + NH4(+). It catalyses the reaction 2'-deoxyadenosine + H2O + H(+) = 2'-deoxyinosine + NH4(+). Its function is as follows. Catalyzes the hydrolytic deamination of adenosine and 2-deoxyadenosine. This is Adenosine deaminase from Clostridium acetobutylicum (strain ATCC 824 / DSM 792 / JCM 1419 / IAM 19013 / LMG 5710 / NBRC 13948 / NRRL B-527 / VKM B-1787 / 2291 / W).